Consider the following 339-residue polypeptide: Ribosome biogenesis protein BRX1 homolog (339 aa).

Positions 1 to 34 (MSAYKRKRGSLPEVATNTKKAKKQLAGSEQEATA) are disordered. Positions 53-242 (ERVLIFSSRG…LIKIFKGSFG (190 aa)) constitute a Brix domain. Positions 304 to 339 (AEEKPQVIETEPPAPKPKMKRKDKQFKRQRMAKKRM) are disordered. Residues 320–339 (PKMKRKDKQFKRQRMAKKRM) show a composition bias toward basic residues.

This sequence belongs to the BRX1 family. In terms of tissue distribution, ubiquitous.

Its subcellular location is the nucleus. It is found in the nucleolus. Functionally, required for biogenesis of the 60S ribosomal subunit. In Xenopus laevis (African clawed frog), this protein is Ribosome biogenesis protein BRX1 homolog (brix1).